The primary structure comprises 647 residues: Threonine--tRNA ligase (647 aa).

Positions 1 to 61 (MINITFPDGA…TEDGSIEIVT (61 aa)) constitute a TGS domain. The segment at 242–540 (DHRKLGKELD…LIENYKGAFP (299 aa)) is catalytic. Positions 336, 387, and 517 each coordinate Zn(2+).

It belongs to the class-II aminoacyl-tRNA synthetase family. Homodimer. The cofactor is Zn(2+).

It is found in the cytoplasm. The catalysed reaction is tRNA(Thr) + L-threonine + ATP = L-threonyl-tRNA(Thr) + AMP + diphosphate + H(+). Functionally, catalyzes the attachment of threonine to tRNA(Thr) in a two-step reaction: L-threonine is first activated by ATP to form Thr-AMP and then transferred to the acceptor end of tRNA(Thr). Also edits incorrectly charged L-seryl-tRNA(Thr). The sequence is that of Threonine--tRNA ligase from Streptococcus pneumoniae (strain P1031).